The sequence spans 713 residues: P-loop NTPase domain-containing protein LPA1 homolog (713 aa).

Disordered stretches follow at residues 218-249 (AKKR…PIGK), 504-575 (TSQA…EDLS), and 650-713 (LDSP…APDK). Residues 231–246 (DFDKTRPLNDKPDGKP) are compositionally biased toward basic and acidic residues. Residues 504–531 (TSQAGSVNESWDNANEGTGSHVPSSSGS) show a composition bias toward polar residues. The span at 533-544 (KKLDGHCKEIKE) shows a compositional bias: basic and acidic residues. The span at 551 to 562 (SDDDEEEEEEAA) shows a compositional bias: acidic residues. Residues 656–668 (ARSSSALPISASS) show a composition bias toward low complexity.

Required for the accumulation of phytic acid in seeds. Phytic acid is the primary storage form of phosphorus in cereal grains and other plant seeds. This is P-loop NTPase domain-containing protein LPA1 homolog from Oryza sativa subsp. japonica (Rice).